A 91-amino-acid chain; its full sequence is DNA-directed RNA polymerase subunit omega (91 aa).

Belongs to the RNA polymerase subunit omega family. The RNAP catalytic core consists of 2 alpha, 1 beta, 1 beta' and 1 omega subunit. When a sigma factor is associated with the core the holoenzyme is formed, which can initiate transcription.

It catalyses the reaction RNA(n) + a ribonucleoside 5'-triphosphate = RNA(n+1) + diphosphate. Promotes RNA polymerase assembly. Latches the N- and C-terminal regions of the beta' subunit thereby facilitating its interaction with the beta and alpha subunits. The polypeptide is DNA-directed RNA polymerase subunit omega (Serratia proteamaculans (strain 568)).